Here is a 206-residue protein sequence, read N- to C-terminus: Inactive ribonuclease-like protein 9 (206 aa).

An N-terminal signal peptide occupies residues 1–26; sequence MMRTLITTHSLLLFLLLLQLLQPLQF. 3 disulfides stabilise this stretch: C99/C154, C117/C169, and C124/C131. N132 carries N-linked (GlcNAc...) asparagine glycosylation.

The protein belongs to the pancreatic ribonuclease family.

It is found in the secreted. Functionally, does not exhibit any ribonuclease activity. This chain is Inactive ribonuclease-like protein 9 (RNASE9), found in Saimiri boliviensis boliviensis (Bolivian squirrel monkey).